A 175-amino-acid polypeptide reads, in one-letter code: ATP synthase subunit delta (175 aa).

This sequence belongs to the ATPase delta chain family. As to quaternary structure, F-type ATPases have 2 components, F(1) - the catalytic core - and F(0) - the membrane proton channel. F(1) has five subunits: alpha(3), beta(3), gamma(1), delta(1), epsilon(1). F(0) has three main subunits: a(1), b(2) and c(10-14). The alpha and beta chains form an alternating ring which encloses part of the gamma chain. F(1) is attached to F(0) by a central stalk formed by the gamma and epsilon chains, while a peripheral stalk is formed by the delta and b chains.

The protein resides in the cell inner membrane. F(1)F(0) ATP synthase produces ATP from ADP in the presence of a proton or sodium gradient. F-type ATPases consist of two structural domains, F(1) containing the extramembraneous catalytic core and F(0) containing the membrane proton channel, linked together by a central stalk and a peripheral stalk. During catalysis, ATP synthesis in the catalytic domain of F(1) is coupled via a rotary mechanism of the central stalk subunits to proton translocation. In terms of biological role, this protein is part of the stalk that links CF(0) to CF(1). It either transmits conformational changes from CF(0) to CF(1) or is implicated in proton conduction. This Xanthomonas oryzae pv. oryzae (strain MAFF 311018) protein is ATP synthase subunit delta.